A 131-amino-acid polypeptide reads, in one-letter code: Large ribosomal subunit protein bL17 (131 aa).

The protein belongs to the bacterial ribosomal protein bL17 family. In terms of assembly, part of the 50S ribosomal subunit. Contacts protein L32.

This chain is Large ribosomal subunit protein bL17, found in Herminiimonas arsenicoxydans.